We begin with the raw amino-acid sequence, 151 residues long: Large ribosomal subunit protein bL9 (151 aa).

It belongs to the bacterial ribosomal protein bL9 family.

In terms of biological role, binds to the 23S rRNA. This is Large ribosomal subunit protein bL9 from Acidobacterium capsulatum (strain ATCC 51196 / DSM 11244 / BCRC 80197 / JCM 7670 / NBRC 15755 / NCIMB 13165 / 161).